Here is a 182-residue protein sequence, read N- to C-terminus: Meiotically up-regulated gene 82 protein (182 aa).

A disordered region spans residues 161-182; that stretch reads EKRLSEKKYKQKKKTQRRITMD. The span at 169–182 shows a compositional bias: basic residues; the sequence is YKQKKKTQRRITMD.

This sequence belongs to the prokaryotic/mitochondrial release factor family.

It is found in the mitochondrion. Has a role in meiosis. The polypeptide is Meiotically up-regulated gene 82 protein (mug82) (Schizosaccharomyces pombe (strain 972 / ATCC 24843) (Fission yeast)).